We begin with the raw amino-acid sequence, 421 residues long: uncharacterized protein (421 aa).

This is an uncharacterized protein from Caenorhabditis elegans.